The chain runs to 711 residues: DNA ligase (711 aa).

The tract at residues 1–29 (MSEDAIGQQVPAAQEAAAGAEPNSAARER) is disordered. Residues 12–25 (AAQEAAAGAEPNSA) are compositionally biased toward low complexity. NAD(+)-binding positions include 54–58 (DAAFD), 103–104 (SL), and glutamate 133. Residue lysine 135 is the N6-AMP-lysine intermediate of the active site. Residues arginine 156, glutamate 197, lysine 313, and lysine 337 each coordinate NAD(+). 4 residues coordinate Zn(2+): cysteine 431, cysteine 434, cysteine 450, and cysteine 456. Positions 620 to 709 (QGPRPLEGVT…PEAARAVARV (90 aa)) constitute a BRCT domain.

This sequence belongs to the NAD-dependent DNA ligase family. LigA subfamily. It depends on Mg(2+) as a cofactor. Requires Mn(2+) as cofactor.

It catalyses the reaction NAD(+) + (deoxyribonucleotide)n-3'-hydroxyl + 5'-phospho-(deoxyribonucleotide)m = (deoxyribonucleotide)n+m + AMP + beta-nicotinamide D-nucleotide.. Functionally, DNA ligase that catalyzes the formation of phosphodiester linkages between 5'-phosphoryl and 3'-hydroxyl groups in double-stranded DNA using NAD as a coenzyme and as the energy source for the reaction. It is essential for DNA replication and repair of damaged DNA. This is DNA ligase from Salinispora tropica (strain ATCC BAA-916 / DSM 44818 / JCM 13857 / NBRC 105044 / CNB-440).